A 175-amino-acid chain; its full sequence is DPY30 domain-containing protein 1 (175 aa).

The segment covering 94–112 (QQKEKQKSEDFETGQEKSF) has biased composition (basic and acidic residues). Disordered regions lie at residues 94-134 (QQKE…QAEE) and 152-175 (APNL…SAPP).

Belongs to the dpy-30 family. Component of the axonemal radial spoke complex 1 (RS1), at least composed of spoke head proteins RSPH1, RSPH3, RSPH9 and the cilia-specific component RSPH4A or sperm-specific component RSPH6A, spoke stalk proteins RSPH14, DNAJB13, DYDC1, ROPN1L and NME5, and the anchor protein IQUB. Interacts with SH3GL3.

It localises to the cytoplasm. The protein localises to the cytoskeleton. The protein resides in the flagellum axoneme. Functionally, functions as part of axonemal radial spoke complexes that play an important part in the motility of sperm and cilia. Plays a crucial role during acrosome biogenesis. The sequence is that of DPY30 domain-containing protein 1 (Dydc1) from Mus musculus (Mouse).